The chain runs to 123 residues: ATP synthase epsilon chain (123 aa).

The protein belongs to the ATPase epsilon chain family. F-type ATPases have 2 components, CF(1) - the catalytic core - and CF(0) - the membrane proton channel. CF(1) has five subunits: alpha(3), beta(3), gamma(1), delta(1), epsilon(1). CF(0) has three main subunits: a, b and c.

The protein resides in the cell inner membrane. Functionally, produces ATP from ADP in the presence of a proton gradient across the membrane. This chain is ATP synthase epsilon chain, found in Helicobacter pylori (strain G27).